Reading from the N-terminus, the 668-residue chain is tRNA 5-methylaminomethyl-2-thiouridine biosynthesis bifunctional protein MnmC (668 aa).

A tRNA (mnm(5)s(2)U34)-methyltransferase region spans residues 1 to 245; sequence MKHYSIQPAN…KREMLCGVME (245 aa). An FAD-dependent cmnm(5)s(2)U34 oxidoreductase region spans residues 270-668; that stretch reads IGGGIASALL…LLKGKAVKAG (399 aa).

It in the N-terminal section; belongs to the methyltransferase superfamily. tRNA (mnm(5)s(2)U34)-methyltransferase family. In the C-terminal section; belongs to the DAO family. FAD is required as a cofactor.

It is found in the cytoplasm. It carries out the reaction 5-aminomethyl-2-thiouridine(34) in tRNA + S-adenosyl-L-methionine = 5-methylaminomethyl-2-thiouridine(34) in tRNA + S-adenosyl-L-homocysteine + H(+). Functionally, catalyzes the last two steps in the biosynthesis of 5-methylaminomethyl-2-thiouridine (mnm(5)s(2)U) at the wobble position (U34) in tRNA. Catalyzes the FAD-dependent demodification of cmnm(5)s(2)U34 to nm(5)s(2)U34, followed by the transfer of a methyl group from S-adenosyl-L-methionine to nm(5)s(2)U34, to form mnm(5)s(2)U34. The polypeptide is tRNA 5-methylaminomethyl-2-thiouridine biosynthesis bifunctional protein MnmC (Escherichia coli (strain K12 / DH10B)).